A 219-amino-acid polypeptide reads, in one-letter code: Ion-translocating oxidoreductase complex subunit G (219 aa).

A helical membrane pass occupies residues 25 to 45 (GLLLGLFSLVSALMLALASDA). FMN phosphoryl threonine is present on T187.

The protein belongs to the RnfG family. As to quaternary structure, the complex is composed of six subunits: RnfA, RnfB, RnfC, RnfD, RnfE and RnfG. FMN serves as cofactor.

The protein resides in the cellular chromatophore membrane. In terms of biological role, part of a membrane-bound complex that couples electron transfer with translocation of ions across the membrane. The chain is Ion-translocating oxidoreductase complex subunit G from Cereibacter sphaeroides (strain ATCC 17023 / DSM 158 / JCM 6121 / CCUG 31486 / LMG 2827 / NBRC 12203 / NCIMB 8253 / ATH 2.4.1.) (Rhodobacter sphaeroides).